A 421-amino-acid chain; its full sequence is MTTNIIDELSWRGLINQSTDLDALREATQEPITLYCGFDPTGPSLHAGHLVPLLMLRRFQQAGHNPIVLAGGATGMIGDPRDVGERTMNSADTVAEWAERISDQLSRFVDFEGEHAARLVNNAEWTNNMSVVTFLRDVGKHFPLNTMLARDTVKRRLETDGISYTEFSYMLLQANDFVELNRRFNCILQVGGGDQWGNIVSGVDLNRRVQGKSVHGITVPLVTDSEGKKFGKSTGGGSLWLDPEMTSPYSWYQYFINAADADVIRYLRWFTFLTKEELDELEVEVAERPFKREAQRRLAREMTNLVHGEEATAAVELAAQALFGRAELRDLDEKTLEASVSETEVAEIQPGEPRTIVDLLIASGLVDSRGAARRTISEGGAYVNNERITADDWEPSESDLLHGQWLVLRKGKKNFAGVKIK.

Position 35 (Y35) interacts with L-tyrosine. Positions 40–49 match the 'HIGH' region motif; it reads PTGPSLHAGH. L-tyrosine-binding residues include Y169 and Q173. Positions 229–233 match the 'KMSKS' region motif; sequence KFGKS. K232 contacts ATP. Residues 354–420 form the S4 RNA-binding domain; it reads RTIVDLLIAS…GKKNFAGVKI (67 aa).

Belongs to the class-I aminoacyl-tRNA synthetase family. TyrS type 1 subfamily. In terms of assembly, homodimer.

Its subcellular location is the cytoplasm. It carries out the reaction tRNA(Tyr) + L-tyrosine + ATP = L-tyrosyl-tRNA(Tyr) + AMP + diphosphate + H(+). Functionally, catalyzes the attachment of tyrosine to tRNA(Tyr) in a two-step reaction: tyrosine is first activated by ATP to form Tyr-AMP and then transferred to the acceptor end of tRNA(Tyr). This is Tyrosine--tRNA ligase from Corynebacterium efficiens (strain DSM 44549 / YS-314 / AJ 12310 / JCM 11189 / NBRC 100395).